The sequence spans 533 residues: Inositol-3-phosphate synthase (533 aa).

The residue at position 48 (Thr48) is a Phosphothreonine. Positions 74, 75, 76, 77, and 148 each coordinate NAD(+). A phosphoserine mark is found at Ser177 and Ser184. NAD(+) contacts are provided by Ser184, Ile185, Gln195, Asp196, Arg198, Thr244, Ala245, Asn246, Thr247, Gly295, Ser296, Asp320, Leu321, Ser323, Asn354, Asn355, and Asp356. Ser296 carries the phosphoserine modification. Ser368 carries the phosphoserine modification. Lys369 is an NAD(+) binding site. Ser374 carries the post-translational modification Phosphoserine. 4 residues coordinate NAD(+): Gly409, Asp410, Asp438, and Ser439.

The protein belongs to the myo-inositol 1-phosphate synthase family. As to quaternary structure, homotetramer. Requires NAD(+) as cofactor. Phosphorylation at Ser-184 and Ser-374 is associated with a decrease in activity. Increasingly phosphorylated in presence of valproate.

Its subcellular location is the cytoplasm. It carries out the reaction D-glucose 6-phosphate = 1D-myo-inositol 3-phosphate. It functions in the pathway polyol metabolism; myo-inositol biosynthesis; myo-inositol from D-glucose 6-phosphate: step 1/2. Competitively inhibited by myo-2-inosose 1-phosphate, which is also an intermediate in the catalytic reaction. Competitively inhibited by 2-deoxy-myo-inositol 1-phosphate (dMIP), 1-deoxy-1-(phosphonomethyl)-myo-2-inosose (DPMI), dihydroxyacetone phosphate (DHAP), 6-deoxy-D-glucose 6-(E)-vinylhomophosphonate, 6-deoxy-D-glucitol 6-(E)-vinylhomophosphonate, 2,6-dideoxy-D-glucose 6-(E)-vinylhomophosphonate and 2,6-dideoxy-D-glucitol 6-(E)-vinylhomophosphonate. Inhibited by 2-deoxyglucitol 6-phosphate (dgtolP). Functionally, key enzyme in myo-inositol biosynthesis pathway that catalyzes the conversion of glucose 6-phosphate to 1-myo-inositol 1-phosphate in a NAD-dependent manner. Rate-limiting enzyme in the synthesis of all inositol-containing compounds. The polypeptide is Inositol-3-phosphate synthase (INO1) (Saccharomyces cerevisiae (strain ATCC 204508 / S288c) (Baker's yeast)).